Consider the following 439-residue polypeptide: RNA polymerase II-associated protein RBA50 (439 aa).

Disordered stretches follow at residues 1–35 (MDLL…GFPE) and 49–79 (LREK…SEAK). A compositionally biased stretch (polar residues) spans 15 to 30 (SVESNDNGTLSTNNCG).

This sequence belongs to the RPAP1 family.

It localises to the cytoplasm. Forms an interface between the RNA polymerase II enzyme and chaperone/scaffolding proteins, suggesting that it is required to connect RNA polymerase II to regulators of protein complex formation. In Saccharomyces cerevisiae (strain ATCC 204508 / S288c) (Baker's yeast), this protein is RNA polymerase II-associated protein RBA50 (RBA50).